The chain runs to 479 residues: Ammonium transporter Rh type C (479 aa).

Over 1–9 (MAWNTNLRW) the chain is Cytoplasmic. Residues 10-30 (RLPLTCLLLQVVMVILFGVFV) form a helical membrane-spanning segment. Residues 31 to 60 (RYDFEADAHWWSERTHKNLSDVENEFYYRY) are Extracellular-facing. An N-linked (GlcNAc...) asparagine glycan is attached at asparagine 48. Residues 61–81 (PSFQDVHVMVFVGFGFLMTFL) form a helical membrane-spanning segment. The Cytoplasmic segment spans residues 82-85 (QRYG). A helical transmembrane segment spans residues 86–106 (FSAVGFNFLLAAFGIQWALLM). Over 107–123 (QGWFHFLQGRYIVVGVE) the chain is Extracellular. A helical membrane pass occupies residues 124 to 144 (NLINADFCVASVCVAFGAVLG). The Cytoplasmic segment spans residues 145–148 (KVSP). A helical membrane pass occupies residues 149-169 (IQLLIMTFFQVTLFAVNEFIL). Residues 170–177 (LNLLKVKD) are Extracellular-facing. The chain crosses the membrane as a helical span at residues 178-200 (AGGSMTIHTFGAYFGLTVTRILY). At 201–218 (RRNLEQSKERQNSVYQSD) the chain is on the cytoplasmic side. The helical transmembrane segment at 219-239 (LFAMIGTLFLWMYWPSFNSAI) threads the bilayer. The Extracellular segment spans residues 240-250 (SYHGDSQHRAA). The helical transmembrane segment at 251-271 (INTYCSLAACVLTSVAISSAL) threads the bilayer. The Cytoplasmic segment spans residues 272 to 281 (HKKGKLDMVH). The chain crosses the membrane as a helical span at residues 282 to 302 (IQNATLAGGVAVGTAAEMMLM). A topological domain (extracellular) is located at residue proline 303. Residues 304 to 324 (YGALIIGFVCGIISTLGFVYL) form a helical membrane-spanning segment. Over 325-345 (TPFLESRLHIQDTCGINNLHG) the chain is Cytoplasmic. Residues 346–366 (IPGIIGGIVGAVTAASASLEV) form a helical membrane-spanning segment. Residues 367-394 (YGKEGLVHSFDFQGFKGDWTARTQGKFQ) are Extracellular-facing. Residues 395–415 (IYGLLVTLAMALMGGIIVGLI) traverse the membrane as a helical segment. Residues 416 to 479 (LRLPFWGQPS…PMASSVPLVP (64 aa)) lie on the Cytoplasmic side of the membrane.

Belongs to the ammonium transporter (TC 2.A.49) family. Rh subfamily. In terms of assembly, homotrimer. In terms of processing, N-glycosylated.

It localises to the cell membrane. Its subcellular location is the apical cell membrane. It carries out the reaction NH4(+)(in) = NH4(+)(out). It catalyses the reaction methylamine(out) = methylamine(in). The catalysed reaction is CO2(out) = CO2(in). Functionally, ammonium transporter involved in the maintenance of acid-base homeostasis. Transports ammonium and its related derivative methylammonium across the plasma membrane of epithelial cells likely contributing to renal transepithelial ammonia transport and ammonia metabolism. Postulated to primarily mediate an electroneutral bidirectional transport of NH3 ammonia species according to a mechanism that implies interaction of an NH4(+) ion with acidic residues of the pore entry followed by dissociation of NH4(+) into NH3 and H(+). As a result NH3 transits through the central pore and is protonated on the extracellular side reforming NH4(+). May act as a CO2 channel providing for renal acid secretion. The sequence is that of Ammonium transporter Rh type C (RHCG) from Pan troglodytes (Chimpanzee).